The chain runs to 329 residues: Alternative oxidase, mitochondrial (329 aa).

Residues 115 to 135 traverse the membrane as a helical segment; that stretch reads VISRCLFLETVAGVPGMVGGM. Residues E123, E162, and H165 each coordinate Fe cation. A helical transmembrane segment spans residues 181 to 201; the sequence is VSIIITQAIMYLFLLVAYVIS. Fe cation-binding residues include E213, E266, and H269. Residues 300 to 329 form a disordered region; sequence EMYSNQPSGKTRTDFGSEGAKTASNVNKHV.

Belongs to the alternative oxidase family. As to quaternary structure, homodimer; disulfide-linked. The cofactor is Fe cation.

It localises to the mitochondrion inner membrane. Catalyzes cyanide-resistant oxygen consumption. May increase respiration when the cytochrome respiratory pathway is restricted, or in response to low temperatures. The protein is Alternative oxidase, mitochondrial (AOX) of Trypanosoma brucei brucei.